A 288-amino-acid polypeptide reads, in one-letter code: Lysosomal thioesterase PPT2 homolog (288 aa).

The first 22 residues, Met1–Ala22, serve as a signal peptide directing secretion. Ser98 acts as the Nucleophile in catalysis. Residue Asn192 is glycosylated (N-linked (GlcNAc...) asparagine). Active-site residues include Asp214 and His269.

This sequence belongs to the palmitoyl-protein thioesterase family. In terms of tissue distribution, expressed in adult head and crop.

It localises to the lysosome. It catalyses the reaction hexadecanoyl-CoA + H2O = hexadecanoate + CoA + H(+). The enzyme catalyses S-hexadecanoyl-N-acetylcysteamine + H2O = N-acetylcysteamine + hexadecanoate + H(+). Functionally, catalyzes the cleavage of thioester bonds from S-palmitoyl-CoA or S-palmitoyl-N-acetylcysteamine (unbranched structures) but does not have activity against palmitoylcysteine or palmitoylated proteins, branched structures or bulky head groups. Conversely, hydrolyzes both long and short chain fatty acyl-CoA substrate. The protein is Lysosomal thioesterase PPT2 homolog (Ppt2) of Drosophila melanogaster (Fruit fly).